The sequence spans 88 residues: Putative membrane protein insertion efficiency factor (88 aa).

This sequence belongs to the UPF0161 family.

It localises to the cell membrane. Functionally, could be involved in insertion of integral membrane proteins into the membrane. This is Putative membrane protein insertion efficiency factor (yrcB) from Lactococcus lactis subsp. lactis (strain IL1403) (Streptococcus lactis).